We begin with the raw amino-acid sequence, 104 residues long: Probable quinol monooxygenase YgiN (104 aa).

In terms of domain architecture, ABM spans 2 to 100 (LTVIAEIRTR…DVLEMNIRIL (99 aa)).

Homodimer.

It catalyses the reaction menadiol + 2 O2 = menadione + 2 superoxide + 2 H(+). Its function is as follows. Can oxidize menadiol to menadione. The chain is Probable quinol monooxygenase YgiN (ygiN) from Escherichia coli O157:H7.